The following is a 349-amino-acid chain: UDP-N-acetylenolpyruvoylglucosamine reductase (349 aa).

An FAD-binding PCMH-type domain is found at 17 to 187 (VNESADLIIQ…TAITLRLNKQ (171 aa)). The active site involves Arg-163. The active-site Proton donor is the Ser-233. Residue Glu-328 is part of the active site.

The protein belongs to the MurB family. The cofactor is FAD.

It is found in the cytoplasm. It carries out the reaction UDP-N-acetyl-alpha-D-muramate + NADP(+) = UDP-N-acetyl-3-O-(1-carboxyvinyl)-alpha-D-glucosamine + NADPH + H(+). It participates in cell wall biogenesis; peptidoglycan biosynthesis. Cell wall formation. This chain is UDP-N-acetylenolpyruvoylglucosamine reductase, found in Aliivibrio fischeri (strain ATCC 700601 / ES114) (Vibrio fischeri).